Reading from the N-terminus, the 143-residue chain is Transcriptional regulator MraZ (143 aa).

SpoVT-AbrB domains lie at 5–47 (SHTP…PMAE) and 76–119 (AADD…DAQR).

Belongs to the MraZ family. As to quaternary structure, forms oligomers.

Its subcellular location is the cytoplasm. It localises to the nucleoid. This is Transcriptional regulator MraZ from Frankia alni (strain DSM 45986 / CECT 9034 / ACN14a).